The sequence spans 285 residues: Bifunctional protein FolD (285 aa).

NADP(+) contacts are provided by residues 165–167 and S190; that span reads GRS.

Belongs to the tetrahydrofolate dehydrogenase/cyclohydrolase family. In terms of assembly, homodimer.

The enzyme catalyses (6R)-5,10-methylene-5,6,7,8-tetrahydrofolate + NADP(+) = (6R)-5,10-methenyltetrahydrofolate + NADPH. The catalysed reaction is (6R)-5,10-methenyltetrahydrofolate + H2O = (6R)-10-formyltetrahydrofolate + H(+). It functions in the pathway one-carbon metabolism; tetrahydrofolate interconversion. Functionally, catalyzes the oxidation of 5,10-methylenetetrahydrofolate to 5,10-methenyltetrahydrofolate and then the hydrolysis of 5,10-methenyltetrahydrofolate to 10-formyltetrahydrofolate. This is Bifunctional protein FolD from Burkholderia cenocepacia (strain HI2424).